Here is a 246-residue protein sequence, read N- to C-terminus: Sugar fermentation stimulation protein homolog (246 aa).

Belongs to the SfsA family.

This Prochlorococcus marinus (strain MIT 9215) protein is Sugar fermentation stimulation protein homolog.